A 475-amino-acid polypeptide reads, in one-letter code: Pup--protein ligase (475 aa).

Glu19 lines the Mg(2+) pocket. Residue Arg64 participates in ATP binding. Tyr66 is a binding site for Mg(2+). The active-site Proton acceptor is Asp68. Residue Glu74 coordinates Mg(2+). ATP contacts are provided by Thr77 and Trp436.

This sequence belongs to the Pup ligase/Pup deamidase family. Pup-conjugating enzyme subfamily.

The catalysed reaction is ATP + [prokaryotic ubiquitin-like protein]-L-glutamate + [protein]-L-lysine = ADP + phosphate + N(6)-([prokaryotic ubiquitin-like protein]-gamma-L-glutamyl)-[protein]-L-lysine.. It functions in the pathway protein degradation; proteasomal Pup-dependent pathway. Its pathway is protein modification; protein pupylation. Its function is as follows. Catalyzes the covalent attachment of the prokaryotic ubiquitin-like protein modifier Pup to the proteasomal substrate proteins, thereby targeting them for proteasomal degradation. This tagging system is termed pupylation. The ligation reaction involves the side-chain carboxylate of the C-terminal glutamate of Pup and the side-chain amino group of a substrate lysine. The chain is Pup--protein ligase from Corynebacterium aurimucosum (strain ATCC 700975 / DSM 44827 / CIP 107346 / CN-1) (Corynebacterium nigricans).